Here is a 95-residue protein sequence, read N- to C-terminus: uncharacterized protein (95 aa).

This is an uncharacterized protein from Dictyostelium discoideum (Social amoeba).